Reading from the N-terminus, the 357-residue chain is MRIIITGGGTGGHIYPALAFLKYLEKVEPDTEVLYIGTKKGLEAKIVPQAGIKLKTVDIQGLRRSLSPQNLKTAYKFFKSVSDAKKIMKEFKPDVVLGTGGYVAGPVVYAAAQLKIPTIIHEGNSFPGITNRFLAKKVDRIAVGFHAAEQYFPASKTTFTGNPRAQEVADAAAQVEKFEEPTVVIFGGSRGALKLNNAFIEALPELAQRSFKTVYASGEIYYDDYKETFNQYKENSNLDIRPYINNMTELLAKSQLFLGRSGSTTIAEVTALGLPAVYVPSPNVTADQQTKNAQEYVDQGAAIIIKDEDLTGQTLVEAISNILENNEKYQEMQAASLKAGVPDASQRLYNLVKEISK.

UDP-N-acetyl-alpha-D-glucosamine contacts are provided by residues 10–12 (TGG), Asn124, Ser189, Ile244, and Gln289.

It belongs to the glycosyltransferase 28 family. MurG subfamily.

The protein localises to the cell membrane. The catalysed reaction is Mur2Ac(oyl-L-Ala-gamma-D-Glu-L-Lys-D-Ala-D-Ala)-di-trans,octa-cis-undecaprenyl diphosphate + UDP-N-acetyl-alpha-D-glucosamine = beta-D-GlcNAc-(1-&gt;4)-Mur2Ac(oyl-L-Ala-gamma-D-Glu-L-Lys-D-Ala-D-Ala)-di-trans,octa-cis-undecaprenyl diphosphate + UDP + H(+). The protein operates within cell wall biogenesis; peptidoglycan biosynthesis. Functionally, cell wall formation. Catalyzes the transfer of a GlcNAc subunit on undecaprenyl-pyrophosphoryl-MurNAc-pentapeptide (lipid intermediate I) to form undecaprenyl-pyrophosphoryl-MurNAc-(pentapeptide)GlcNAc (lipid intermediate II). The protein is UDP-N-acetylglucosamine--N-acetylmuramyl-(pentapeptide) pyrophosphoryl-undecaprenol N-acetylglucosamine transferase of Lactococcus lactis subsp. lactis (strain IL1403) (Streptococcus lactis).